Reading from the N-terminus, the 385-residue chain is Probable peptidoglycan glycosyltransferase FtsW (385 aa).

A run of 9 helical transmembrane segments spans residues 18–38 (LLWTAILLALAGLVMVSSASL), 57–77 (IYLALGLGVGAFVYYAVPLAL), 81–101 (LRFVMLPVALVALVMVFIPGL), 111–131 (WIALPGLTIQASEIVKLCFVL), 157–177 (LLGVLMLLLLLEPDFGAVVVL), 195–215 (FLLIGLIAVALGGLVAFAEPY), 280–300 (LGLLGNVALIGGFILLGWRVF), 311–331 (LLYHAYLVYGCAFVFCSQAFI), and 347–367 (LPFISYGGSSLLISAVMVGLI).

It belongs to the SEDS family. FtsW subfamily.

It is found in the cell inner membrane. The enzyme catalyses [GlcNAc-(1-&gt;4)-Mur2Ac(oyl-L-Ala-gamma-D-Glu-L-Lys-D-Ala-D-Ala)](n)-di-trans,octa-cis-undecaprenyl diphosphate + beta-D-GlcNAc-(1-&gt;4)-Mur2Ac(oyl-L-Ala-gamma-D-Glu-L-Lys-D-Ala-D-Ala)-di-trans,octa-cis-undecaprenyl diphosphate = [GlcNAc-(1-&gt;4)-Mur2Ac(oyl-L-Ala-gamma-D-Glu-L-Lys-D-Ala-D-Ala)](n+1)-di-trans,octa-cis-undecaprenyl diphosphate + di-trans,octa-cis-undecaprenyl diphosphate + H(+). The protein operates within cell wall biogenesis; peptidoglycan biosynthesis. In terms of biological role, peptidoglycan polymerase that is essential for cell division. In Alcanivorax borkumensis (strain ATCC 700651 / DSM 11573 / NCIMB 13689 / SK2), this protein is Probable peptidoglycan glycosyltransferase FtsW.